A 213-amino-acid polypeptide reads, in one-letter code: Orotate phosphoribosyltransferase (213 aa).

Residue K26 coordinates 5-phospho-alpha-D-ribose 1-diphosphate. Residue 34–35 (FF) coordinates orotate. Residues 72 to 73 (YK), R99, K100, K103, H105, and 124 to 132 (DDVITAGTA) contribute to the 5-phospho-alpha-D-ribose 1-diphosphate site. Residues T128 and R156 each coordinate orotate.

Belongs to the purine/pyrimidine phosphoribosyltransferase family. PyrE subfamily. In terms of assembly, homodimer. It depends on Mg(2+) as a cofactor.

It catalyses the reaction orotidine 5'-phosphate + diphosphate = orotate + 5-phospho-alpha-D-ribose 1-diphosphate. The protein operates within pyrimidine metabolism; UMP biosynthesis via de novo pathway; UMP from orotate: step 1/2. Functionally, catalyzes the transfer of a ribosyl phosphate group from 5-phosphoribose 1-diphosphate to orotate, leading to the formation of orotidine monophosphate (OMP). This is Orotate phosphoribosyltransferase from Aliivibrio fischeri (strain MJ11) (Vibrio fischeri).